A 112-amino-acid chain; its full sequence is Putative membrane protein insertion efficiency factor (112 aa).

Belongs to the UPF0161 family.

The protein localises to the cell inner membrane. In terms of biological role, could be involved in insertion of integral membrane proteins into the membrane. This chain is Putative membrane protein insertion efficiency factor, found in Bradyrhizobium diazoefficiens (strain JCM 10833 / BCRC 13528 / IAM 13628 / NBRC 14792 / USDA 110).